The chain runs to 755 residues: MSRDPLPFFPPLYLGGPEITTENCEREPIHIPGSIQPHGALLTADGHSGEVLQMSLNAATFLGQEPTVLRGQTLAALLPEQWPALQAALPPGCPDALQYRATLDWPAAGHLSLTVHRVGELLILEFEPTEAWDSTGPHALRNAMFALESAPNLRALAEVATQTVRELTGFDRVMLYKFAPDATGEVIAEARREGLHAFLGHRFPASDIPAQARALYTRHLLRLTADTRAAAVPLDPVLNPQTNAPTPLGGAVLRATSPMHMQYLRNMGVGSSLSVSVVVGGQLWGLIACHHQTPYVLPPDLRTTLEYLGRLLSLQVQVKEAADVAAFRQSLREHHARVALAAAHSLSPHDTLSDPALDLLGLMRAGGLILRFEGRWQTLGEVPPAPAVDALLAWLETQPGALVQTDALGQLWPAGADLAPSAAGLLAISVGEGWSECLVWLRPELRLEVAWGGATPDQAKDDLGPRHSFDTYLEEKRGYAEPWHPGEIEEAQDLRDTLTGALGERLSVIRDLNRALTQSNAEWRQYGFVISHHMQEPVRLISQFAELLTRQPRAQDGSPDSPQTERITGFLLRETSRLRSLTQDLHTYTALLSAPPPVRRPTPLGRVVDDVLQDLEPRIADTGASIEVAPELPVIAADAGLLRDLLLHLIGNALTFGGPEPRIAVRTERQGAGWSIAVSDQGAGIAPEYQERIFLLFQRLGSLDEALGNGLGLPLCRKIAELHGGTLTVESAPGEGSTFRCWLPDAGPLPGAADA.

C24 contacts a tetrapyrrole. Residues 26-94 (REPIHIPGSI…LQAALPPGCP (69 aa)) form the PAS domain. A chromophore binding domain region spans residues 95-504 (DALQYRATLD…RDTLTGALGE (410 aa)). Residues 152–316 (NLRALAEVAT…YLGRLLSLQV (165 aa)) enclose the GAF domain. The 219-residue stretch at 529–747 (VISHHMQEPV…TFRCWLPDAG (219 aa)) folds into the Histidine kinase domain. H532 bears the Phosphohistidine; by autocatalysis mark.

The protein in the N-terminal section; belongs to the phytochrome family. Post-translationally, contains one covalently linked tetrapyrrole chromophore. Lacks the cysteine conserved in plant phytochromes (at the position of Met-259) that binds chromophore. An engineered sequence used for X-ray crystallography forms a thioether link to biliverdin through Cys-24. The natural sequence can bind phycocyanobilin and phytochromobilin in vitro, but the identity of the natural chromophore is unknown.

The catalysed reaction is ATP + protein L-histidine = ADP + protein N-phospho-L-histidine.. Functionally, photoreceptor which exists in two forms that are reversibly interconvertible by light: the R form that absorbs maximally in the red region of the spectrum and the FR form that absorbs maximally in the far-red region. Also has a slight blue shift for the far-red maximum. Could also absorb green light. May participate in regulating pigment synthesis like the carotenoid deinoxanthin which could protect the bacterium from intense visible light. In Deinococcus radiodurans (strain ATCC 13939 / DSM 20539 / JCM 16871 / CCUG 27074 / LMG 4051 / NBRC 15346 / NCIMB 9279 / VKM B-1422 / R1), this protein is Bacteriophytochrome (bphP).